The sequence spans 1063 residues: Cation efflux system protein CzcA (1063 aa).

Transmembrane regions (helical) follow at residues 14-29 (WLVL…LGIF), 350-370 (GAVL…AALI), 452-472 (LIFG…LTGV), 487-507 (ALLG…ALFI), 534-554 (LANT…CVAI), 883-903 (VVVP…FNNI), 906-926 (GLLV…ALWI), 937-957 (VGFI…LSFI), 982-1004 (VLMT…GTGA), and 1013-1033 (VVIG…PVLY). The tract at residues 1040–1063 (DEDAEDTREPVTQTHQPDQGRQPA) is disordered. Polar residues predominate over residues 1049 to 1063 (PVTQTHQPDQGRQPA).

This sequence belongs to the resistance-nodulation-cell division (RND) (TC 2.A.6) family.

The protein resides in the cell membrane. Its function is as follows. Has a low cation transport activity for cobalt, it is essential for the expression of cobalt, zinc, and cadmium resistance. CzcA and CzcB together would act in zinc efflux nearly as effectively as the complete CZC efflux system (CzcABC). This is Cation efflux system protein CzcA (czcA) from Alcaligenes sp. (strain CT14).